Consider the following 178-residue polypeptide: Ribulose bisphosphate carboxylase small subunit, chloroplastic 4 (178 aa).

The transit peptide at 1–54 (MASISSTVATVSRAAPAQANMVAPFTGLKSNAAFPATKKANDFSTLPSNGGRVQ) directs the protein to the chloroplast.

Belongs to the RuBisCO small chain family. As to quaternary structure, heterohexadecamer of 8 large and 8 small subunits.

Its subcellular location is the plastid. It localises to the chloroplast. RuBisCO catalyzes two reactions: the carboxylation of D-ribulose 1,5-bisphosphate, the primary event in carbon dioxide fixation, as well as the oxidative fragmentation of the pentose substrate. Both reactions occur simultaneously and in competition at the same active site. Although the small subunit is not catalytic it is essential for maximal activity. In Flaveria pringlei, this protein is Ribulose bisphosphate carboxylase small subunit, chloroplastic 4.